Here is a 320-residue protein sequence, read N- to C-terminus: Malate dehydrogenase 2 (320 aa).

NAD(+)-binding positions include 10–15 (GAGQIG) and aspartate 34. Arginine 83 and arginine 89 together coordinate substrate. Residues asparagine 96 and 119 to 121 (ITN) each bind NAD(+). Asparagine 121 and arginine 152 together coordinate substrate. Residue histidine 176 is the Proton acceptor of the active site.

The protein belongs to the LDH/MDH superfamily. MDH type 3 family.

The enzyme catalyses (S)-malate + NAD(+) = oxaloacetate + NADH + H(+). Catalyzes the reversible oxidation of malate to oxaloacetate. This Rhodopseudomonas palustris (strain BisB18) protein is Malate dehydrogenase 2.